Here is a 72-residue protein sequence, read N- to C-terminus: Hydrophobic protein OSR8 (72 aa).

Helical transmembrane passes span 9–29 (FLEI…RFGC) and 39–59 (LLTI…LVAL).

It belongs to the UPF0057 (PMP3) family.

The protein resides in the membrane. This Oryza sativa subsp. japonica (Rice) protein is Hydrophobic protein OSR8 (OSR8).